A 285-amino-acid chain; its full sequence is MMEAIKKKMQMLKLDKENVLDRAEQAEAEQKQAEERSKQLEDELATMQKKLKGTEDELDKYSEALKDAQEKLELAEKKAADAEAEVASLNRRIQLVEEELDRAQERLATALQKLEEAEKAADESERGMKVIENRALKDEEKMELQEIQLKEAKHIAEEADRKYEEVARKLVIIEGDLERTEERAELAESKCSELEEELKNVTNNLKSLEAQAEKYSQKEDKYEEEIKILTDKLKEAETRAEFAERSVAKLEKTIDDLEDELYAQKLKYKAISDELDHALNDMTSI.

Positions 1–285 (MMEAIKKKMQ…DHALNDMTSI (285 aa)) form a coiled coil. Met2 carries the N-acetylmethionine modification. Met2 bears the N-acetylalanine mark. The residue at position 54 (Thr54) is a Phosphothreonine. 2 positions are modified to phosphoserine: Ser62 and Ser88. Position 109 is a phosphothreonine (Thr109). Phosphoserine is present on residues Ser207 and Ser216. Ile228 is subject to N6-acetyllysine. The residue at position 253 (Thr253) is a Phosphothreonine. Tyr262 is subject to Phosphotyrosine. Ser272 bears the Phosphoserine mark. At Thr283 the chain carries Phosphothreonine. Residue Ser284 is modified to Phosphoserine.

The protein belongs to the tropomyosin family. In terms of assembly, homodimer. Heterodimer of an alpha (TPM1, TPM3 or TPM4) and a beta (TPM2) chain. Interacts with TMOD1. Interacts with TNNT1.

It is found in the cytoplasm. Its subcellular location is the cytoskeleton. Binds to actin filaments in muscle and non-muscle cells. Plays a central role, in association with the troponin complex, in the calcium dependent regulation of vertebrate striated muscle contraction. Smooth muscle contraction is regulated by interaction with caldesmon. In non-muscle cells is implicated in stabilizing cytoskeleton actin filaments. The chain is Tropomyosin alpha-3 chain (Tpm3) from Mus musculus (Mouse).